The following is a 447-amino-acid chain: 3-phosphoshikimate 1-carboxyvinyltransferase (447 aa).

The segment at 1–22 is disordered; sequence MTPSLKRLSGAMRARPAPALSG. 3 residues coordinate 3-phosphoshikimate: Lys-30, Ser-31, and Arg-35. Phosphoenolpyruvate is bound at residue Lys-30. Residues Gly-102 and Arg-130 each coordinate phosphoenolpyruvate. 3-phosphoshikimate contacts are provided by Ser-173, Gln-175, Asp-325, and Lys-352. Gln-175 is a phosphoenolpyruvate binding site. The active-site Proton acceptor is the Asp-325. Phosphoenolpyruvate is bound by residues Arg-356 and Arg-401.

It belongs to the EPSP synthase family. In terms of assembly, monomer.

The protein resides in the cytoplasm. It carries out the reaction 3-phosphoshikimate + phosphoenolpyruvate = 5-O-(1-carboxyvinyl)-3-phosphoshikimate + phosphate. It participates in metabolic intermediate biosynthesis; chorismate biosynthesis; chorismate from D-erythrose 4-phosphate and phosphoenolpyruvate: step 6/7. In terms of biological role, catalyzes the transfer of the enolpyruvyl moiety of phosphoenolpyruvate (PEP) to the 5-hydroxyl of shikimate-3-phosphate (S3P) to produce enolpyruvyl shikimate-3-phosphate and inorganic phosphate. This chain is 3-phosphoshikimate 1-carboxyvinyltransferase, found in Maricaulis maris (strain MCS10) (Caulobacter maris).